The following is a 138-amino-acid chain: Large ribosomal subunit protein bL17 (138 aa).

This sequence belongs to the bacterial ribosomal protein bL17 family. As to quaternary structure, part of the 50S ribosomal subunit. Contacts protein L32.

The sequence is that of Large ribosomal subunit protein bL17 from Nitrobacter hamburgensis (strain DSM 10229 / NCIMB 13809 / X14).